The primary structure comprises 152 residues: MIALIQRVRRAEVRVADRVTGAIEAGLLALVCAERGDTEAAADRLLAKVLGYRVFSDAAGKMNLSVQNLDGAGRAGGLLLVSQFTLAADTNSGLRPSFTPAAPPDEGKRLFDYFVAAARAKHPVVETGEFGADMQVSLVNDGPVTFWLQTHA.

Residues 142-143 (GP) carry the Gly-cisPro motif, important for rejection of L-amino acids motif.

It belongs to the DTD family. In terms of assembly, homodimer.

It localises to the cytoplasm. The enzyme catalyses glycyl-tRNA(Ala) + H2O = tRNA(Ala) + glycine + H(+). It carries out the reaction a D-aminoacyl-tRNA + H2O = a tRNA + a D-alpha-amino acid + H(+). An aminoacyl-tRNA editing enzyme that deacylates mischarged D-aminoacyl-tRNAs. Also deacylates mischarged glycyl-tRNA(Ala), protecting cells against glycine mischarging by AlaRS. Acts via tRNA-based rather than protein-based catalysis; rejects L-amino acids rather than detecting D-amino acids in the active site. By recycling D-aminoacyl-tRNA to D-amino acids and free tRNA molecules, this enzyme counteracts the toxicity associated with the formation of D-aminoacyl-tRNA entities in vivo and helps enforce protein L-homochirality. The polypeptide is D-aminoacyl-tRNA deacylase (Paraburkholderia xenovorans (strain LB400)).